The chain runs to 235 residues: Large ribosomal subunit protein uL1 (235 aa).

This sequence belongs to the universal ribosomal protein uL1 family. As to quaternary structure, part of the 50S ribosomal subunit.

Binds directly to 23S rRNA. The L1 stalk is quite mobile in the ribosome, and is involved in E site tRNA release. In terms of biological role, protein L1 is also a translational repressor protein, it controls the translation of the L11 operon by binding to its mRNA. The sequence is that of Large ribosomal subunit protein uL1 from Synechococcus sp. (strain CC9605).